A 384-amino-acid chain; its full sequence is Lipid-A-disaccharide synthase (384 aa).

The protein belongs to the LpxB family.

It carries out the reaction 2-N,3-O-bis[(3R)-3-hydroxytetradecanoyl]-alpha-D-glucosaminyl 1-phosphate + UDP-2-N,3-O-bis[(3R)-3-hydroxytetradecanoyl]-alpha-D-glucosamine = lipid A disaccharide (E. coli) + UDP + H(+). The catalysed reaction is a lipid X + a UDP-2-N,3-O-bis[(3R)-3-hydroxyacyl]-alpha-D-glucosamine = a lipid A disaccharide + UDP + H(+). It participates in glycolipid biosynthesis; lipid IV(A) biosynthesis; lipid IV(A) from (3R)-3-hydroxytetradecanoyl-[acyl-carrier-protein] and UDP-N-acetyl-alpha-D-glucosamine: step 5/6. Its function is as follows. Condensation of UDP-2,3-diacylglucosamine and 2,3-diacylglucosamine-1-phosphate to form lipid A disaccharide, a precursor of lipid A, a phosphorylated glycolipid that anchors the lipopolysaccharide to the outer membrane of the cell. This Blochmanniella floridana protein is Lipid-A-disaccharide synthase.